A 67-amino-acid polypeptide reads, in one-letter code: Conotoxin Im3.1 (67 aa).

A signal peptide spans 1 to 20 (MMSTLVVLLTICLLMLPLTA). Residues 21–52 (RQLDADQLADQLAERMEDISADQNRWFDPVKR) constitute a propeptide that is removed on maturation. Cystine bridges form between Cys53–Cys63, Cys54–Cys61, and Cys59–Cys64.

This sequence belongs to the conotoxin M superfamily. Expressed by the venom duct.

It localises to the secreted. Functionally, probable neurotoxin. The chain is Conotoxin Im3.1 from Conus imperialis (Imperial cone).